Reading from the N-terminus, the 186-residue chain is Low amplitude and bright protein LabA (186 aa).

In terms of biological role, functions in an output pathway of the circadian clock. One of three clock output pathways. Involved in negative feedback regulation of KaiC; deletion leads to overexpression of KaiC protein and decreases the amplitude of the circadian response. Overexpression reduces the expression of circadian genes. In Synechococcus elongatus (strain ATCC 33912 / PCC 7942 / FACHB-805) (Anacystis nidulans R2), this protein is Low amplitude and bright protein LabA.